Consider the following 310-residue polypeptide: MKKIYKRLLFSGLALSMLFFLSGCVQMKNGKPTGEGWVYKFFAAPMGSVIQYLANNLGLGFGFAIIIVTVIVRLLILPLGLSQVRKMTYQSEKMAYLKPVFDPIQERMKNAKTQEEKMAAQTELMQAQRHYGMSMFGGLGCLPLLIQMPFFSALYISTRYTKGIASASFLGIKLGSPNMIITVIIGILYLVQSWVSTLSVPEAQRQQTRNMMFMMPIMMVMISIGAPAGGALYWLVSGIFGLIQQLITNHIIKPKLRKQIDEEFKKNPPKPFKSNARKDITPQANNDKKLITSKKQKSNRNAGKQRHHKQ.

The N-terminal stretch at 1–23 (MKKIYKRLLFSGLALSMLFFLSG) is a signal peptide. Cys-24 carries the N-palmitoyl cysteine lipid modification. A lipid anchor (S-diacylglycerol cysteine) is attached at Cys-24. 5 consecutive transmembrane segments (helical) span residues 34–54 (GEGW…QYLA), 57–77 (LGLG…LLIL), 136–156 (FGGL…ALYI), 180–200 (IITV…TLSV), and 220–240 (VMIS…SGIF). Residues 263-310 (EFKKNPPKPFKSNARKDITPQANNDKKLITSKKQKSNRNAGKQRHHKQ) form a disordered region. The segment covering 276–290 (ARKDITPQANNDKKL) has biased composition (basic and acidic residues). A compositionally biased stretch (basic residues) spans 291–310 (ITSKKQKSNRNAGKQRHHKQ).

Belongs to the OXA1/ALB3/YidC family. Type 2 subfamily.

It is found in the cell membrane. In terms of biological role, required for the insertion and/or proper folding and/or complex formation of integral membrane proteins into the membrane. Involved in integration of membrane proteins that insert both dependently and independently of the Sec translocase complex, as well as at least some lipoproteins. Partially complements an E.coli yidC depletion experiment. The chain is Membrane protein insertase YidC 2 (yidC2) from Streptococcus mutans serotype c (strain ATCC 700610 / UA159).